The chain runs to 147 residues: NADH-quinone oxidoreductase subunit A (147 aa).

3 helical membrane-spanning segments follow: residues 11-31, 68-88, and 93-113; these read IWPL…VMAL, LIAV…AWAV, and LGWP…AALA.

It belongs to the complex I subunit 3 family. As to quaternary structure, NDH-1 is composed of 14 different subunits. Subunits NuoA, H, J, K, L, M, N constitute the membrane sector of the complex.

The protein localises to the cell inner membrane. The catalysed reaction is a quinone + NADH + 5 H(+)(in) = a quinol + NAD(+) + 4 H(+)(out). Functionally, NDH-1 shuttles electrons from NADH, via FMN and iron-sulfur (Fe-S) centers, to quinones in the respiratory chain. The immediate electron acceptor for the enzyme in this species is believed to be ubiquinone. Couples the redox reaction to proton translocation (for every two electrons transferred, four hydrogen ions are translocated across the cytoplasmic membrane), and thus conserves the redox energy in a proton gradient. This Nitrosospira multiformis (strain ATCC 25196 / NCIMB 11849 / C 71) protein is NADH-quinone oxidoreductase subunit A.